Reading from the N-terminus, the 252-residue chain is Uridylate kinase (252 aa).

24 to 27 (KLSG) is an ATP binding site. The involved in allosteric activation by GTP stretch occupies residues 32–37 (GEEGFG). A UMP-binding site is contributed by Gly-66. ATP-binding residues include Gly-67 and Arg-71. UMP is bound by residues Asp-86 and 147–154 (TGNPFFTT). Residues Thr-174, Tyr-180, and Asp-183 each contribute to the ATP site.

It belongs to the UMP kinase family. Homohexamer.

Its subcellular location is the cytoplasm. It carries out the reaction UMP + ATP = UDP + ADP. Its pathway is pyrimidine metabolism; CTP biosynthesis via de novo pathway; UDP from UMP (UMPK route): step 1/1. Allosterically activated by GTP. Inhibited by UTP. Functionally, catalyzes the reversible phosphorylation of UMP to UDP. The sequence is that of Uridylate kinase from Alcanivorax borkumensis (strain ATCC 700651 / DSM 11573 / NCIMB 13689 / SK2).